Here is a 206-residue protein sequence, read N- to C-terminus: Ras-related protein Ral-B (206 aa).

G21–A29 is a binding site for GTP. The short motif at Y43 to Y51 is the Effector region element. Residues D68–Q72, N128–D131, and S158–K160 contribute to the GTP site. The segment at M181–L206 is disordered. C203 is modified (cysteine methyl ester). A lipid anchor (S-geranylgeranyl cysteine) is attached at C203. Residues C204–L206 constitute a propeptide, removed in mature form.

Belongs to the small GTPase superfamily. Ras family. Interacts with EXOC2/Sec5 and EXOC8/Exo84. Interacts (via effector domain) with RALBP1. Post-translationally, prenylation is essential for membrane localization. The farnesylated form confers resistance to the proapoptotic and anti-anchorage-dependent growth effects of some geranylgeranyltransferase I inhibitors.

The protein resides in the cell membrane. Its subcellular location is the midbody. The enzyme catalyses GTP + H2O = GDP + phosphate + H(+). With respect to regulation, alternates between an inactive form bound to GDP and an active form bound to GTP. Activated by a guanine nucleotide-exchange factor (GEF) and inactivated by a GTPase-activating protein (GAP). Functionally, multifunctional GTPase involved in a variety of cellular processes including gene expression, cell migration, cell proliferation, oncogenic transformation and membrane trafficking. Accomplishes its multiple functions by interacting with distinct downstream effectors. Acts as a GTP sensor for GTP-dependent exocytosis of dense core vesicles. Required both to stabilize the assembly of the exocyst complex and to localize functional exocyst complexes to the leading edge of migrating cells. Required for suppression of apoptosis. In late stages of cytokinesis, upon completion of the bridge formation between dividing cells, mediates exocyst recruitment to the midbody to drive abscission. Involved in ligand-dependent receptor mediated endocytosis of the EGF and insulin receptors. The sequence is that of Ras-related protein Ral-B (Ralb) from Rattus norvegicus (Rat).